We begin with the raw amino-acid sequence, 291 residues long: Ribosomal RNA small subunit methyltransferase H (291 aa).

S-adenosyl-L-methionine-binding positions include 25-27, Asp-45, Phe-73, Asp-88, and Gln-95; that span reads GGH.

The protein belongs to the methyltransferase superfamily. RsmH family.

It localises to the cytoplasm. It catalyses the reaction cytidine(1402) in 16S rRNA + S-adenosyl-L-methionine = N(4)-methylcytidine(1402) in 16S rRNA + S-adenosyl-L-homocysteine + H(+). Specifically methylates the N4 position of cytidine in position 1402 (C1402) of 16S rRNA. In Flavobacterium psychrophilum (strain ATCC 49511 / DSM 21280 / CIP 103535 / JIP02/86), this protein is Ribosomal RNA small subunit methyltransferase H.